The primary structure comprises 146 residues: Phospholipase A2 PS22 (146 aa).

The first 19 residues, 1–19 (MYPAHLLVLLAVCVSLLGA), serve as a signal peptide directing secretion. A propeptide spanning residues 20–27 (ASVPPQPL) is cleaved from the precursor. 7 disulfides stabilise this stretch: cysteine 38/cysteine 98, cysteine 54/cysteine 145, cysteine 56/cysteine 72, cysteine 71/cysteine 126, cysteine 78/cysteine 119, cysteine 87/cysteine 112, and cysteine 105/cysteine 117. Residues tyrosine 55, glycine 57, and glycine 59 each coordinate Ca(2+). Histidine 75 is a catalytic residue. Aspartate 76 provides a ligand contact to Ca(2+). Aspartate 120 is an active-site residue.

Belongs to the phospholipase A2 family. Group I subfamily. D49 sub-subfamily. Ca(2+) serves as cofactor. As to expression, expressed by the venom gland.

It localises to the secreted. It catalyses the reaction a 1,2-diacyl-sn-glycero-3-phosphocholine + H2O = a 1-acyl-sn-glycero-3-phosphocholine + a fatty acid + H(+). In terms of biological role, snake venom phospholipase A2 (PLA2) that inhibits collagen-induced platelet aggregation. PLA2 catalyzes the calcium-dependent hydrolysis of the 2-acyl groups in 3-sn-phosphoglycerides. The protein is Phospholipase A2 PS22 of Drysdalia coronoides (White-lipped snake).